Reading from the N-terminus, the 566-residue chain is Proline--tRNA ligase (566 aa).

This sequence belongs to the class-II aminoacyl-tRNA synthetase family. ProS type 1 subfamily. Homodimer.

It is found in the cytoplasm. It catalyses the reaction tRNA(Pro) + L-proline + ATP = L-prolyl-tRNA(Pro) + AMP + diphosphate. Functionally, catalyzes the attachment of proline to tRNA(Pro) in a two-step reaction: proline is first activated by ATP to form Pro-AMP and then transferred to the acceptor end of tRNA(Pro). As ProRS can inadvertently accommodate and process non-cognate amino acids such as alanine and cysteine, to avoid such errors it has two additional distinct editing activities against alanine. One activity is designated as 'pretransfer' editing and involves the tRNA(Pro)-independent hydrolysis of activated Ala-AMP. The other activity is designated 'posttransfer' editing and involves deacylation of mischarged Ala-tRNA(Pro). The misacylated Cys-tRNA(Pro) is not edited by ProRS. This chain is Proline--tRNA ligase, found in Shouchella clausii (strain KSM-K16) (Alkalihalobacillus clausii).